A 24-amino-acid chain; its full sequence is Brevinin-1SY (24 aa).

Residues Cys-18 and Cys-24 are joined by a disulfide bond.

Expressed by the skin glands.

It localises to the secreted. In terms of biological role, antibacterial activity against Gram-positive bacterium S.aureus and Gram-negative bacterium E.coli. In Lithobates sylvaticus (Wood frog), this protein is Brevinin-1SY.